Consider the following 169-residue polypeptide: Small ribosomal subunit protein uS13m (169 aa).

The disordered stretch occupies residues 149 to 169 (KKLQEKKNKEQKKSQKCKTKK). The span at 150–161 (KLQEKKNKEQKK) shows a compositional bias: basic and acidic residues.

Belongs to the universal ribosomal protein uS13 family. Part of the small ribosomal subunit.

It is found in the mitochondrion. Functionally, located at the top of the head of the small subunit, it contacts several helices of the small subunit rRNA. This Dictyostelium discoideum (Social amoeba) protein is Small ribosomal subunit protein uS13m (mrps13).